A 344-amino-acid polypeptide reads, in one-letter code: Heme A synthase (344 aa).

9 helical membrane passes run 20 to 40 (IAWW…VGGL), 104 to 124 (RFLG…FVVT), 135 to 155 (LIFL…MVMS), 170 to 190 (AHLG…LDLL), 205 to 225 (AAAI…VAGI), 233 to 253 (TWPL…TPVW), 265 to 285 (FQHR…WWAA), 296 to 316 (WLAV…LWVV), and 317 to 337 (PIPL…VAVW). H267 provides a ligand contact to heme. Heme is bound at residue H324.

Belongs to the COX15/CtaA family. Type 2 subfamily. In terms of assembly, interacts with CtaB. The cofactor is heme b.

The protein resides in the cell membrane. It catalyses the reaction Fe(II)-heme o + 2 A + H2O = Fe(II)-heme a + 2 AH2. Its pathway is porphyrin-containing compound metabolism; heme A biosynthesis; heme A from heme O: step 1/1. Its function is as follows. Catalyzes the conversion of heme O to heme A by two successive hydroxylations of the methyl group at C8. The first hydroxylation forms heme I, the second hydroxylation results in an unstable dihydroxymethyl group, which spontaneously dehydrates, resulting in the formyl group of heme A. The sequence is that of Heme A synthase from Parvibaculum lavamentivorans (strain DS-1 / DSM 13023 / NCIMB 13966).